The following is a 747-amino-acid chain: ATP-dependent RNA helicase DBP7 (747 aa).

Disordered regions lie at residues 1–102 (MDDD…TYVS) and 111–130 (SKLENEKVEEEKTYLPSNAP). Residues 15-24 (SNASSKSSAQ) show a composition bias toward polar residues. Composition is skewed to basic and acidic residues over residues 75-96 (SFREEQLAKRPKYFESRGEGGK) and 111-123 (SKLENEKVEEEKT). Residues 135-164 (DDFNGLGLNDNLVHHLTESLRFKNPTQIQK) carry the Q motif motif. In terms of domain architecture, Helicase ATP-binding spans 168 to 363 (PSLLSTSRDL…SIILNNPEQI (196 aa)). 181–188 (AQTGSGKT) serves as a coordination point for ATP. The DEAD box signature appears at 295-298 (DEGD). The region spanning 401–626 (TLSAVLKEVA…SSEIKKSDPK (226 aa)) is the Helicase C-terminal domain. Residues 700–729 (KKLGSLATKSSSTRKEYGEKSRKLEDPRKK) are disordered. A compositionally biased stretch (basic and acidic residues) spans 712 to 728 (TRKEYGEKSRKLEDPRK).

The protein belongs to the DEAD box helicase family. DDX31/DBP7 subfamily.

The protein localises to the nucleus. It is found in the nucleolus. The enzyme catalyses ATP + H2O = ADP + phosphate + H(+). ATP-binding RNA helicase involved in the biogenesis of 60S ribosomal subunits and is required for the normal formation of 25S and 5.8S rRNAs. This is ATP-dependent RNA helicase DBP7 (DBP7) from Meyerozyma guilliermondii (strain ATCC 6260 / CBS 566 / DSM 6381 / JCM 1539 / NBRC 10279 / NRRL Y-324) (Yeast).